A 143-amino-acid chain; its full sequence is Large ribosomal subunit protein uL11 (143 aa).

The protein belongs to the universal ribosomal protein uL11 family. As to quaternary structure, part of the ribosomal stalk of the 50S ribosomal subunit. Interacts with L10 and the large rRNA to form the base of the stalk. L10 forms an elongated spine to which L12 dimers bind in a sequential fashion forming a multimeric L10(L12)X complex. In terms of processing, one or more lysine residues are methylated.

Functionally, forms part of the ribosomal stalk which helps the ribosome interact with GTP-bound translation factors. The polypeptide is Large ribosomal subunit protein uL11 (Pseudomonas fluorescens (strain Pf0-1)).